The chain runs to 281 residues: Digeranylgeranylglyceryl phosphate synthase (281 aa).

5 helical membrane-spanning segments follow: residues 88–108 (IALSLFGIALSIFLGFIEFLI), 132–152 (ALVSLGVAFTLIFGSLAAGNL), 200–220 (GILVFLLSLATVVLTILPVIF), 225–245 (IIYLSLSVIISLPILMLASAI), and 261–281 (LIKVSMFLGLLGMLLDPFRVV).

This sequence belongs to the UbiA prenyltransferase family. DGGGP synthase subfamily. The cofactor is Mg(2+).

The protein localises to the cell membrane. The enzyme catalyses sn-3-O-(geranylgeranyl)glycerol 1-phosphate + (2E,6E,10E)-geranylgeranyl diphosphate = 2,3-bis-O-(geranylgeranyl)-sn-glycerol 1-phosphate + diphosphate. It functions in the pathway membrane lipid metabolism; glycerophospholipid metabolism. Its function is as follows. Prenyltransferase that catalyzes the transfer of the geranylgeranyl moiety of geranylgeranyl diphosphate (GGPP) to the C2 hydroxyl of (S)-3-O-geranylgeranylglyceryl phosphate (GGGP). This reaction is the second ether-bond-formation step in the biosynthesis of archaeal membrane lipids. This is Digeranylgeranylglyceryl phosphate synthase from Korarchaeum cryptofilum (strain OPF8).